The chain runs to 107 residues: uncharacterized protein (107 aa).

Residues Q86–V107 form a disordered region. Residues E92–V107 are compositionally biased toward acidic residues.

This is an uncharacterized protein from Rickettsia prowazekii (strain Madrid E).